A 615-amino-acid chain; its full sequence is Isocitrate dehydrogenase kinase/phosphatase (615 aa).

Residues 328 to 334 and K349 each bind ATP; that span reads APGIRGL. D384 is an active-site residue. Positions 595–615 are disordered; that stretch reads AEPPATPPVKQPDAGPARRVA.

The protein belongs to the AceK family.

The protein resides in the cytoplasm. The catalysed reaction is L-seryl-[isocitrate dehydrogenase] + ATP = O-phospho-L-seryl-[isocitrate dehydrogenase] + ADP + H(+). Bifunctional enzyme which can phosphorylate or dephosphorylate isocitrate dehydrogenase (IDH) on a specific serine residue. This is a regulatory mechanism which enables bacteria to bypass the Krebs cycle via the glyoxylate shunt in response to the source of carbon. When bacteria are grown on glucose, IDH is fully active and unphosphorylated, but when grown on acetate or ethanol, the activity of IDH declines drastically concomitant with its phosphorylation. The sequence is that of Isocitrate dehydrogenase kinase/phosphatase from Cupriavidus taiwanensis (strain DSM 17343 / BCRC 17206 / CCUG 44338 / CIP 107171 / LMG 19424 / R1) (Ralstonia taiwanensis (strain LMG 19424)).